An 89-amino-acid chain; its full sequence is Acylphosphatase (89 aa).

Residues Cys-4–Arg-89 enclose the Acylphosphatase-like domain. Residues Arg-19 and Asn-37 contribute to the active site.

This sequence belongs to the acylphosphatase family.

It carries out the reaction an acyl phosphate + H2O = a carboxylate + phosphate + H(+). The chain is Acylphosphatase (acyP) from Nitrosococcus oceani (strain ATCC 19707 / BCRC 17464 / JCM 30415 / NCIMB 11848 / C-107).